A 502-amino-acid chain; its full sequence is L-ornithine N(5)-monooxygenase (502 aa).

A compositionally biased stretch (basic and acidic residues) spans 1–10 (MEPVERKLEI). Positions 1 to 34 (MEPVERKLEIGSRSYSKMPLTQQRSSGEPPRLKA) are disordered. The span at 13-26 (RSYSKMPLTQQRSS) shows a compositional bias: polar residues. FAD contacts are provided by residues 83–91 (ERQKQFAWH) and glutamine 102. Lysine 107 contributes to the substrate binding site. Valine 168 contributes to the FAD binding site. Residues 254 to 257 (SGQS) and arginine 279 each bind NADP(+). Substrate-binding positions include 293 to 296 (NEVF) and asparagine 323. Residue 323 to 325 (NYS) coordinates NADP(+). 466-468 (SLL) serves as a coordination point for FAD. Serine 469 lines the substrate pocket.

This sequence belongs to the lysine N(6)-hydroxylase/L-ornithine N(5)-oxygenase family. In terms of assembly, homotetramer. Requires FAD as cofactor.

The enzyme catalyses L-ornithine + NADPH + O2 = N(5)-hydroxy-L-ornithine + NADP(+) + H2O. The catalysed reaction is L-ornithine + NADH + O2 = N(5)-hydroxy-L-ornithine + NAD(+) + H2O. It participates in siderophore biosynthesis. In terms of biological role, catalyzes the conversion of L-ornithine to N(5)-hydroxyornithine, the first step in the biosynthesis of all hydroxamate-containing siderophores, such as deferriferrichrysin. In Aspergillus oryzae (strain ATCC 42149 / RIB 40) (Yellow koji mold), this protein is L-ornithine N(5)-monooxygenase.